The following is a 715-amino-acid chain: Phosphoribosylformylglycinamidine synthase subunit PurL (715 aa).

Residue His-33 is part of the active site. Tyr-36 contributes to the ATP binding site. Residue Glu-77 coordinates Mg(2+). Substrate-binding positions include 78-81 and Arg-100; that span reads SHNH. His-79 acts as the Proton acceptor in catalysis. Asp-101 provides a ligand contact to Mg(2+). Position 225 (Gln-225) interacts with substrate. Asp-253 is a Mg(2+) binding site. 297–299 is a binding site for substrate; the sequence is ESQ. 2 residues coordinate ATP: Asn-475 and Gly-512. Asn-513 lines the Mg(2+) pocket. Ser-515 is a binding site for substrate.

The protein belongs to the FGAMS family. As to quaternary structure, monomer. Part of the FGAM synthase complex composed of 1 PurL, 1 PurQ and 2 PurS subunits.

Its subcellular location is the cytoplasm. It catalyses the reaction N(2)-formyl-N(1)-(5-phospho-beta-D-ribosyl)glycinamide + L-glutamine + ATP + H2O = 2-formamido-N(1)-(5-O-phospho-beta-D-ribosyl)acetamidine + L-glutamate + ADP + phosphate + H(+). The protein operates within purine metabolism; IMP biosynthesis via de novo pathway; 5-amino-1-(5-phospho-D-ribosyl)imidazole from N(2)-formyl-N(1)-(5-phospho-D-ribosyl)glycinamide: step 1/2. Its function is as follows. Part of the phosphoribosylformylglycinamidine synthase complex involved in the purines biosynthetic pathway. Catalyzes the ATP-dependent conversion of formylglycinamide ribonucleotide (FGAR) and glutamine to yield formylglycinamidine ribonucleotide (FGAM) and glutamate. The FGAM synthase complex is composed of three subunits. PurQ produces an ammonia molecule by converting glutamine to glutamate. PurL transfers the ammonia molecule to FGAR to form FGAM in an ATP-dependent manner. PurS interacts with PurQ and PurL and is thought to assist in the transfer of the ammonia molecule from PurQ to PurL. In Methanosarcina acetivorans (strain ATCC 35395 / DSM 2834 / JCM 12185 / C2A), this protein is Phosphoribosylformylglycinamidine synthase subunit PurL.